We begin with the raw amino-acid sequence, 961 residues long: MQDKRTVKVGTVADTAVGGRTKSLGVEVTDSVNSFGARNRVKVGDKSYQIYRLDAVPNTEKLPYSLKVLAENLLRNEDGSNITKDHIEAIANWDPKAGASIEIQYTPARVVMQDFTGVPCIVDLATMREAIADLGGNPEKVNPLAPADLVIDHSVIADLFGTADAFERNVEIEYQRNGERYQFLRWLQGAFSDFKVVPPRRIVHQVNIEYLARVVMERVGVAYPDTCVGTDSHTTMVNGLGVLGWGVGGIEAEAAMLGQPVSMLIPRVVGFKLTGEDPAPGAATDVVLTVTEICAKHGVVGKFVEFYGEGVAEVPLANRATLGNMSPEFGSTAAIFPIDQETIDYLKFTGRNAEQVALVETYAKEQGLWHDPAHEPAFSEYLELDLSQVVPSIAGPKRPQDRIALSQAKSVFREQIPSYVGDGDGQQGYSKLDEVVDETFPASDPGAPSNGHADDLPAVQSAAAHANGRPSNPVTVRSDELGEFVLDHGAVVIAAVTSCTNTSNPEVMLGAALLARQRVEKGLASKPWVKTTMAPGSQVVHDYYDKAGLWPYLEKLGFYLVGYGCTTCIGNSGPLPEEISKAINDNDLSVTAVLSGNRNFEGRINPDVKMNYPASPPLVVAYALAGTMTRLEKQPLGKDKDGNDVYLKDICRSQKTLGHHPIGDNSEWFTKNYADVFKGEQAWRNLPTPTRNTFEWSPDSTYVRKPPYFEGMPAEPEPVADISSARVVALLGDSVTTDHISPAGSIKPGTPAAQYLDDARRGPQGLQLFGCRRGNHEVMIRGTFANIRLRNLLHDDVAGGYTRDFTQDGGPQAFIYDAAQNYAAQNIPLVVLGGKEYGSGSSRDWAAKGTRLLGVRAVIAESFERIHRSNLIGMGVIPLQFPDGKSAKDLGLDGTEVFDITGIEELNKGKTPKTVHVKASKNGSDAAEFDAVVRIDTPGEADYYRNGGILQYVLRNMLKSG.

[4Fe-4S] cluster-binding residues include Cys-499, Cys-565, and Cys-568.

Belongs to the aconitase/IPM isomerase family. Monomer. The cofactor is [4Fe-4S] cluster.

The enzyme catalyses citrate = D-threo-isocitrate. It catalyses the reaction (2S,3R)-3-hydroxybutane-1,2,3-tricarboxylate = 2-methyl-cis-aconitate + H2O. It functions in the pathway carbohydrate metabolism; tricarboxylic acid cycle; isocitrate from oxaloacetate: step 2/2. Its pathway is organic acid metabolism; propanoate degradation. Its function is as follows. Involved in the catabolism of short chain fatty acids (SCFA) via the tricarboxylic acid (TCA)(acetyl degradation route) and probably via the 2-methylcitrate cycle I (propionate degradation route). Catalyzes the reversible isomerization of citrate to isocitrate via cis-aconitate. The apo form of AcnA functions as a RNA-binding regulatory protein. Could catalyze the hydration of 2-methyl-cis-aconitate to yield (2R,3S)-2-methylisocitrate. The polypeptide is Aconitate hydratase A (acn) (Mycobacterium avium).